Reading from the N-terminus, the 727-residue chain is Pre-B-cell leukemia transcription factor-interacting protein 1 (727 aa).

Over residues 1–10 the composition is skewed to polar residues; the sequence is MASCPDSDNS. Positions 1–135 are disordered; the sequence is MASCPDSDNS…SPHRSLPSSP (135 aa). Low complexity predominate over residues 39–53; that stretch reads RAPQSPSRAAAEESA. S43 is subject to Phosphoserine. A compositionally biased stretch (polar residues) spans 61–70; that stretch reads TVSQNESSKS. Residues S130, S134, S147, S148, and S149 each carry the phosphoserine modification. T153 carries the post-translational modification Phosphothreonine. Coiled-coil stretches lie at residues 269-353 and 380-421; these read QNMA…QGAD and SPGF…SLKE. Residues 488–506 carry the Nuclear localization signal motif; the sequence is WKTEHWKHKKEASGREKSW. Disordered regions lie at residues 491–568 and 701–727; these read EHWK…AKDR and KRSG…HRQG. Composition is skewed to basic and acidic residues over residues 498–544, 551–568, and 716–727; these read EASG…EPPR, PSGE…AKDR, and GPREEHSPHRQG. The Nuclear localization signal motif lies at 696-719; the sequence is DKALKKRSGKKDKHLQNRVVGPRE.

In terms of assembly, interacts with ESR1, PBX1, PBX2 and PBX3. Interacts with TEX11.

The protein localises to the cytoplasm. It is found in the cytoskeleton. The protein resides in the nucleus. In terms of biological role, regulator of pre-B-cell leukemia transcription factors (BPXs) function. Inhibits the binding of PBX1-HOX complex to DNA and blocks the transcriptional activity of E2A-PBX1. Tethers estrogen receptor-alpha (ESR1) to microtubules and allows them to influence estrogen receptors-alpha signaling. In Bos taurus (Bovine), this protein is Pre-B-cell leukemia transcription factor-interacting protein 1 (PBXIP1).